The following is a 201-amino-acid chain: Small ribosomal subunit protein uS4 (201 aa).

The segment at 1–42 (MARYTGPATRKSRRLGVDLVGGDQSFEKRPYPPGQHGRARIK) is disordered. The region spanning 91 to 157 (SRLDNVVYRA…LPFQIARETA (67 aa)) is the S4 RNA-binding domain.

Belongs to the universal ribosomal protein uS4 family. In terms of assembly, part of the 30S ribosomal subunit. Contacts protein S5. The interaction surface between S4 and S5 is involved in control of translational fidelity.

Its function is as follows. One of the primary rRNA binding proteins, it binds directly to 16S rRNA where it nucleates assembly of the body of the 30S subunit. In terms of biological role, with S5 and S12 plays an important role in translational accuracy. This Mycolicibacterium smegmatis (strain ATCC 700084 / mc(2)155) (Mycobacterium smegmatis) protein is Small ribosomal subunit protein uS4.